Consider the following 183-residue polypeptide: Threonylcarbamoyl-AMP synthase (183 aa).

The region spanning 1-183 (MNITQIIEKL…LFTNQLVRQG (183 aa)) is the YrdC-like domain.

This sequence belongs to the SUA5 family. TsaC subfamily.

The protein localises to the cytoplasm. The catalysed reaction is L-threonine + hydrogencarbonate + ATP = L-threonylcarbamoyladenylate + diphosphate + H2O. Its function is as follows. Required for the formation of a threonylcarbamoyl group on adenosine at position 37 (t(6)A37) in tRNAs that read codons beginning with adenine. Catalyzes the conversion of L-threonine, HCO(3)(-)/CO(2) and ATP to give threonylcarbamoyl-AMP (TC-AMP) as the acyladenylate intermediate, with the release of diphosphate. In Histophilus somni (strain 2336) (Haemophilus somnus), this protein is Threonylcarbamoyl-AMP synthase.